The following is a 269-amino-acid chain: MKTPVELAVSGIQTLPLQHRCRGSHRVKARASYVDESLFGSPAGTRPTPPDFDPPWVEKANRTSGVGTGTSRASGANGSCETTSSSGSTPTLTPRKKNKYRLISHTPSYCDESLFGSRPEGTNWEGPWMAKGDAAKLHSLFWTPPATPRGSHSPRPRETPLRAIHPAGPSKTEPKVAADSQKLSTDGLDSPHPLRRERSHSLTHLNVPRTGRPPTSGPHTNGPRDPRPSPSGVTLQSPLVTPRARSVRISVPATPQRGGATQKPKPPWK.

The Nuclear export signal signature appears at 5-17 (VELAVSGIQTLPL). 2 disordered regions span residues 37–101 (SLFG…NKYR) and 141–269 (FWTP…PPWK). Residues 62 to 77 (RTSGVGTGTSRASGAN) show a composition bias toward polar residues. A compositionally biased stretch (low complexity) spans 79 to 93 (SCETTSSSGSTPTLT). The Nuclear localization signal signature appears at 92-108 (LTPRKKNKYRLISHTPS). Residues 128–156 (WMAKGDAAKLHSLFWTPPATPRGSHSPRP) are interaction with RBPJ/RBPSUH. The interval 156-269 (PRETPLRAIH…ATQKPKPPWK (114 aa)) is interaction with tubulin.

Belongs to the RITA family. As to quaternary structure, interacts with RBPJ/RBPSUH.

It localises to the cytoplasm. The protein resides in the nucleus. It is found in the cytoskeleton. The protein localises to the microtubule organizing center. Its subcellular location is the centrosome. Functionally, tubulin-binding protein that acts as a negative regulator of Notch signaling pathway. Shuttles between the cytoplasm and the nucleus and mediates the nuclear export of RBPJ/RBPSUH, thereby preventing the interaction between RBPJ/RBPSUH and NICD product of Notch proteins (Notch intracellular domain), leading to down-regulate Notch-mediated transcription. May play a role in neurogenesis. The polypeptide is RBPJ-interacting and tubulin-associated protein 1 (RITA1) (Ailuropoda melanoleuca (Giant panda)).